Reading from the N-terminus, the 103-residue chain is Nematocin (103 aa).

A signal peptide spans 1-19 (MGSSPILLVLAISIGLASA). A disulfide bridge links C20 with C25. At Y30 the chain carries Tyrosine amide. Residues 31–103 (GRTIRCSSCG…QGGCQTSAMC (73 aa)) constitute a propeptide that is removed on maturation.

It belongs to the vasopressin/oxytocin family. As to expression, detected in thermosensory AFD neurons, neurosecretory NSM cells, AVK interneurons, pharyngeal neuron M5, and the mechanosensory DVA neuron. Detected in male-specific CP motor neurons.

The protein resides in the secreted. Functionally, ligand for the G-protein coupled receptor ntr-1. Plays a role in gustatory associative learning. Also plays a role in male mating behavior. The sequence is that of Nematocin from Caenorhabditis elegans.